Here is a 275-residue protein sequence, read N- to C-terminus: Nitrogenase iron protein 3 (275 aa).

9 to 16 is an ATP binding site; the sequence is GKGGIGKS. A [4Fe-4S] cluster-binding site is contributed by C97. At R100 the chain carries ADP-ribosylarginine; by dinitrogenase reductase ADP-ribosyltransferase. C132 is a binding site for [4Fe-4S] cluster.

It belongs to the NifH/BchL/ChlL family. As to quaternary structure, homodimer. [4Fe-4S] cluster serves as cofactor. In terms of processing, the reversible ADP-ribosylation of Arg-100 inactivates the nitrogenase reductase and regulates nitrogenase activity.

It carries out the reaction N2 + 8 reduced [2Fe-2S]-[ferredoxin] + 16 ATP + 16 H2O = H2 + 8 oxidized [2Fe-2S]-[ferredoxin] + 2 NH4(+) + 16 ADP + 16 phosphate + 6 H(+). Its function is as follows. The key enzymatic reactions in nitrogen fixation are catalyzed by the nitrogenase complex, which has 2 components: the iron protein (component 2) and a component 1 which is either a molybdenum-iron protein, a vanadium-iron, or an iron-iron protein. The chain is Nitrogenase iron protein 3 (anfH) from Azotobacter vinelandii.